A 763-amino-acid polypeptide reads, in one-letter code: Protein translocase subunit SecA 2 (763 aa).

Residues Gln83, 101–105 (GEGKT), and Asp490 each bind ATP.

The protein belongs to the SecA family. As to quaternary structure, monomer and homodimer. Part of the essential Sec protein translocation apparatus which comprises SecA, SecYEG and auxiliary proteins SecDF. Other proteins may also be involved.

It localises to the cell membrane. The protein resides in the cytoplasm. It carries out the reaction ATP + H2O + cellular proteinSide 1 = ADP + phosphate + cellular proteinSide 2.. In terms of biological role, part of the Sec protein translocase complex. Interacts with the SecYEG preprotein conducting channel. Has a central role in coupling the hydrolysis of ATP to the transfer of proteins into and across the cell membrane, serving as an ATP-driven molecular motor driving the stepwise translocation of polypeptide chains across the membrane. The polypeptide is Protein translocase subunit SecA 2 (Corynebacterium efficiens (strain DSM 44549 / YS-314 / AJ 12310 / JCM 11189 / NBRC 100395)).